We begin with the raw amino-acid sequence, 295 residues long: Pyridoxal 5'-phosphate synthase subunit PdxS (295 aa).

A D-ribose 5-phosphate-binding site is contributed by D25. K82 serves as the catalytic Schiff-base intermediate with D-ribose 5-phosphate. G154 contributes to the D-ribose 5-phosphate binding site. R166 contributes to the D-glyceraldehyde 3-phosphate binding site. D-ribose 5-phosphate-binding positions include G215 and 236-237 (GS).

This sequence belongs to the PdxS/SNZ family. In terms of assembly, in the presence of PdxT, forms a dodecamer of heterodimers.

The catalysed reaction is aldehydo-D-ribose 5-phosphate + D-glyceraldehyde 3-phosphate + L-glutamine = pyridoxal 5'-phosphate + L-glutamate + phosphate + 3 H2O + H(+). The protein operates within cofactor biosynthesis; pyridoxal 5'-phosphate biosynthesis. In terms of biological role, catalyzes the formation of pyridoxal 5'-phosphate from ribose 5-phosphate (RBP), glyceraldehyde 3-phosphate (G3P) and ammonia. The ammonia is provided by the PdxT subunit. Can also use ribulose 5-phosphate and dihydroxyacetone phosphate as substrates, resulting from enzyme-catalyzed isomerization of RBP and G3P, respectively. The sequence is that of Pyridoxal 5'-phosphate synthase subunit PdxS from Bacillus cereus (strain G9842).